The sequence spans 441 residues: Chromosomal replication initiator protein DnaA (441 aa).

Positions 1 to 80 are domain I, interacts with DnaA modulators; it reads MQNDVLARWE…MHQEISLQFI (80 aa). The segment at 80–102 is domain II; sequence ILAGQEVDQPKPKERSSEETYIN. The tract at residues 103–320 is domain III, AAA+ region; it reads ILNPRYTFDT…GALIRVSAFS (218 aa). Residues G147, G149, K150, and T151 each contribute to the ATP site. Residues 321–441 form a domain IV, binds dsDNA region; sequence SLEQRDATPQ…IKELKKRIGE (121 aa).

The protein belongs to the DnaA family. As to quaternary structure, oligomerizes as a right-handed, spiral filament on DNA at oriC.

It is found in the cytoplasm. In terms of biological role, plays an essential role in the initiation and regulation of chromosomal replication. ATP-DnaA binds to the origin of replication (oriC) to initiate formation of the DNA replication initiation complex once per cell cycle. Binds the DnaA box (a 9 base pair repeat at the origin) and separates the double-stranded (ds)DNA. Forms a right-handed helical filament on oriC DNA; dsDNA binds to the exterior of the filament while single-stranded (ss)DNA is stabiized in the filament's interior. The ATP-DnaA-oriC complex binds and stabilizes one strand of the AT-rich DNA unwinding element (DUE), permitting loading of DNA polymerase. After initiation quickly degrades to an ADP-DnaA complex that is not apt for DNA replication. Binds acidic phospholipids. This Desulforamulus reducens (strain ATCC BAA-1160 / DSM 100696 / MI-1) (Desulfotomaculum reducens) protein is Chromosomal replication initiator protein DnaA.